The following is a 221-amino-acid chain: Endo-1,4-beta-xylanase 11A (221 aa).

Positions methionine 1–alanine 17 are cleaved as a signal peptide. The GH11 domain occupies arginine 28–arginine 218. N-linked (GlcNAc...) asparagine glycosylation is present at asparagine 89. Glutamate 113 (nucleophile) is an active-site residue. Glutamate 205 functions as the Proton donor in the catalytic mechanism.

This sequence belongs to the glycosyl hydrolase 11 (cellulase G) family.

It is found in the secreted. The catalysed reaction is Endohydrolysis of (1-&gt;4)-beta-D-xylosidic linkages in xylans.. The protein operates within glycan degradation; xylan degradation. Its activity is regulated as follows. Retains an activity of 52.5% in the presence of 5 mM SDS. Functionally, endo-1,4-beta-xylanase involved in the hydrolysis of xylan, a major structural heterogeneous polysaccharide found in plant biomass representing the second most abundant polysaccharide in the biosphere, after cellulose. Is an alkali-tolerant enzyme, exhibiting 50.6% of activity at pH 9.0, and 26.9% even at pH 10.0. This Humicola insolens (Soft-rot fungus) protein is Endo-1,4-beta-xylanase 11A.